The sequence spans 67 residues: Sec-independent protein translocase protein TatA (67 aa).

A helical membrane pass occupies residues Met1–Gly21.

It belongs to the TatA/E family. As to quaternary structure, the Tat system comprises two distinct complexes: a TatABC complex, containing multiple copies of TatA, TatB and TatC subunits, and a separate TatA complex, containing only TatA subunits. Substrates initially bind to the TatABC complex, which probably triggers association of the separate TatA complex to form the active translocon.

The protein resides in the cell inner membrane. In terms of biological role, part of the twin-arginine translocation (Tat) system that transports large folded proteins containing a characteristic twin-arginine motif in their signal peptide across membranes. TatA could form the protein-conducting channel of the Tat system. The protein is Sec-independent protein translocase protein TatA of Ruthia magnifica subsp. Calyptogena magnifica.